We begin with the raw amino-acid sequence, 289 residues long: Oxaloacetate decarboxylase (289 aa).

Serine 50 lines the substrate pocket. Aspartate 88 serves as a coordination point for Mg(2+). 2 residues coordinate substrate: arginine 159 and histidine 235.

Belongs to the isocitrate lyase family. Oxaloacetate decarboxylase subfamily. As to quaternary structure, homotetramer; dimer of dimers. The cofactor is Mg(2+).

The enzyme catalyses oxaloacetate + H(+) = pyruvate + CO2. Catalyzes the decarboxylation of oxaloacetate into pyruvate. Seems to play a role in maintaining cellular concentrations of bicarbonate and pyruvate. The protein is Oxaloacetate decarboxylase of Pseudomonas fluorescens (strain SBW25).